Here is a 203-residue protein sequence, read N- to C-terminus: Auxin-induced protein 22E (203 aa).

An EAR-like (transcriptional repression) motif is present at residues 15 to 19 (LRLGL). The tract at residues 15 to 77 (LRLGLPGSDE…DHNEDSVQPA (63 aa)) is disordered. The segment covering 43–52 (SSPELEESRC) has biased composition (basic and acidic residues). The span at 58–67 (SDSSDSTTTS) shows a compositional bias: low complexity. The 93-residue stretch at 107-199 (GMYLKVSMAG…RIIKGSEAKG (93 aa)) folds into the PB1 domain.

The protein belongs to the Aux/IAA family. As to quaternary structure, homodimers and heterodimers.

It is found in the nucleus. In terms of biological role, aux/IAA proteins are short-lived transcriptional factors that function as repressors of early auxin response genes at low auxin concentrations. Repression is thought to result from the interaction with auxin response factors (ARFs), proteins that bind to the auxin-responsive promoter element (AuxRE). Formation of heterodimers with ARF proteins may alter their ability to modulate early auxin response genes expression. The chain is Auxin-induced protein 22E (AUX22E) from Vigna radiata var. radiata (Mung bean).